The sequence spans 77 residues: Phytosulfokines 5 (77 aa).

Residues 1–24 (MVKFTTFLCIIALLLCSTLTHASA) form the signal peptide. Residues 25 to 68 (RLNPTSVYPEENSFKKLEQGEVICEGVGEEECFLIRRTLVAHTD) constitute a propeptide that is removed on maturation. Residues Y69 and Y71 each carry the sulfotyrosine modification. Positions 74 to 77 (NHNP) are excised as a propeptide.

The protein belongs to the phytosulfokine family. Sulfation is important for activity and for the binding to a putative membrane receptor. In terms of processing, PSK-beta is an enzymatic derivative of PSK-alpha. As to expression, expressed in stems, roots, mature leaves and flowers. Most abundant in vascular bundles.

It localises to the secreted. In terms of biological role, promotes plant cell differentiation, organogenesis and somatic embryogenesis as well as cell proliferation. May be involved in the low quiescent center cell proliferation. The protein is Phytosulfokines 5 (PSK5) of Arabidopsis thaliana (Mouse-ear cress).